A 270-amino-acid chain; its full sequence is ATP synthase subunit a (270 aa).

Helical transmembrane passes span 29-49 (VDTF…FAMV), 87-107 (IAPL…MDLF), 108-128 (PVDL…GLEP), 140-160 (DVNA…GFSI), 182-202 (PVGA…ELAA), 220-240 (LIFI…GAPW), and 241-261 (AIFH…LTIV).

The protein belongs to the ATPase A chain family. In terms of assembly, F-type ATPases have 2 components, CF(1) - the catalytic core - and CF(0) - the membrane proton channel. CF(1) has five subunits: alpha(3), beta(3), gamma(1), delta(1), epsilon(1). CF(0) has three main subunits: a(1), b(2) and c(9-12). The alpha and beta chains form an alternating ring which encloses part of the gamma chain. CF(1) is attached to CF(0) by a central stalk formed by the gamma and epsilon chains, while a peripheral stalk is formed by the delta and b chains.

It is found in the cell inner membrane. In terms of biological role, key component of the proton channel; it plays a direct role in the translocation of protons across the membrane. This is ATP synthase subunit a from Chromobacterium violaceum (strain ATCC 12472 / DSM 30191 / JCM 1249 / CCUG 213 / NBRC 12614 / NCIMB 9131 / NCTC 9757 / MK).